A 135-amino-acid chain; its full sequence is Ribosome-binding factor A (135 aa).

The protein belongs to the RbfA family. In terms of assembly, monomer. Binds 30S ribosomal subunits, but not 50S ribosomal subunits or 70S ribosomes.

It localises to the cytoplasm. In terms of biological role, one of several proteins that assist in the late maturation steps of the functional core of the 30S ribosomal subunit. Associates with free 30S ribosomal subunits (but not with 30S subunits that are part of 70S ribosomes or polysomes). Required for efficient processing of 16S rRNA. May interact with the 5'-terminal helix region of 16S rRNA. The protein is Ribosome-binding factor A of Bartonella tribocorum (strain CIP 105476 / IBS 506).